Reading from the N-terminus, the 90-residue chain is Probable Fe(2+)-trafficking protein (90 aa).

Belongs to the Fe(2+)-trafficking protein family.

Its function is as follows. Could be a mediator in iron transactions between iron acquisition and iron-requiring processes, such as synthesis and/or repair of Fe-S clusters in biosynthetic enzymes. In Methylococcus capsulatus (strain ATCC 33009 / NCIMB 11132 / Bath), this protein is Probable Fe(2+)-trafficking protein.